A 688-amino-acid chain; its full sequence is Sodium channel and clathrin linker 1 (688 aa).

Position 2 is an N-acetylalanine (alanine 2). Residues 59–673 (LIAEYEKHLE…SASQQLSVIT (615 aa)) adopt a coiled-coil conformation. Serine 681 is modified (phosphoserine).

Interacts with SCN10A and clathrin. Identified in a complex containing SCN10A, clathrin and SCLT1. As to expression, detected in small neurons in dorsal root ganglia. Detected in C-type fibers of sciatic nerve (at protein level).

It is found in the cytoplasm. The protein resides in the cytoskeleton. The protein localises to the microtubule organizing center. It localises to the centrosome. Its subcellular location is the centriole. Adapter protein that links SCN10A to clathrin. Regulates SCN10A channel activity, possibly by promoting channel internalization. The sequence is that of Sodium channel and clathrin linker 1 (Sclt1) from Rattus norvegicus (Rat).